A 371-amino-acid chain; its full sequence is Probable alcohol acetyltransferase (371 aa).

Catalysis depends on charge relay system residues Ser124 and His295. The interval 325-352 is disordered; it reads AKALEESPKESYSRPPAHQQPLHKNDFT. The span at 327–336 shows a compositional bias: basic and acidic residues; the sequence is ALEESPKESY.

It belongs to the AB hydrolase superfamily.

In terms of biological role, probable alcohol acetyltransferase that uses acetyl-CoA to synthesize acetate esters from various alcohols. Not involved in the synthesis of ethyl acetate. The protein is Probable alcohol acetyltransferase (EAT2) of Cyberlindnera fabianii (Yeast).